Consider the following 313-residue polypeptide: D-alanine--D-alanine ligase (313 aa).

An ATP-grasp domain is found at 114 to 309 (KWLWKGVGLP…FSKLVLKLIS (196 aa)). 142 to 195 (DLTFPVIVKPSHEGSSIGMRKVDTLDALQEAVDFAQQYDSEILIEQWITGREFT) provides a ligand contact to ATP. 3 residues coordinate Mg(2+): D263, E276, and N278.

The protein belongs to the D-alanine--D-alanine ligase family. Mg(2+) serves as cofactor. The cofactor is Mn(2+).

It localises to the cytoplasm. It carries out the reaction 2 D-alanine + ATP = D-alanyl-D-alanine + ADP + phosphate + H(+). It functions in the pathway cell wall biogenesis; peptidoglycan biosynthesis. Functionally, cell wall formation. The chain is D-alanine--D-alanine ligase from Hydrogenovibrio crunogenus (strain DSM 25203 / XCL-2) (Thiomicrospira crunogena).